Reading from the N-terminus, the 865-residue chain is ABC transporter ATP-binding/permease protein Rv1747 (865 aa).

The 50-residue stretch at 29–78 folds into the FHA 1 domain; that stretch reads VVVGRDLRADVRVAHPLISRAHLLLRFDQGRWVAIDNGSLNGLYLNNRRV. Residues 104–205 form a disordered region; sequence GRHRGSAGRP…PAGARGGTEA (102 aa). The segment covering 135-156 has biased composition (low complexity); the sequence is PQTGTLGSGQLQQLPPATTRIP. The residue at position 152 (T152) is a Phosphothreonine. A compositionally biased stretch (pro residues) spans 157–166; it reads AAPPSGPQPR. At T210 the chain carries Phosphothreonine. Residues 230-279 form the FHA 2 domain; it reads VRIGRANDNDIVIPEVLASRHHATLVPTPGGTEIRDNRSINGTFVNGARV. Positions 319–552 constitute an ABC transporter domain; the sequence is LDVRGVTWTI…VMGTTNWADI (234 aa). Residue 352 to 359 participates in ATP binding; the sequence is GPSGAGKS. In terms of domain architecture, ABC transmembrane type-2 spans 596–810; sequence RQFSTIARRQ…TPARWGFAAS (215 aa). 6 helical membrane passes run 614-634, 652-672, 700-720, 740-760, 767-787, and 836-856; these read GYFVFLALLPFIMGALSMSVP, PGQILVLLNVGAVFMGTALTI, VCVYTVLAVVQSAIVTVIVLV, FVDVAVTCVASAMLGLALSAI, IMPLLVVAVMSQLVFSGGMIP, and SAWWFDMAMLVALSVIYVGFV.

The protein in the central section; belongs to the ABC transporter superfamily. In the C-terminal section; belongs to the ABC-2 integral membrane protein family. In terms of assembly, homodimer. Interacts with PknF. Phosphorylated by PknF. Can probably be phosphorylated in vivo by other kinases when PknF is missing.

It localises to the cell membrane. Function is positively regulated by phosphorylation. Functionally, involved in the translocation of an unknown substrate across the membrane. Transmembrane domains (TMD) form a pore in the membrane and the ATP-binding domain (NBD) is responsible for energy generation. Required for virulence. This chain is ABC transporter ATP-binding/permease protein Rv1747, found in Mycobacterium tuberculosis (strain ATCC 25618 / H37Rv).